Consider the following 121-residue polypeptide: Small ribosomal subunit protein uS10 (121 aa).

The interval 1 to 20 (MTEQKAKSSKTSSEEAKKQK) is disordered.

This sequence belongs to the universal ribosomal protein uS10 family. Part of the 30S ribosomal subunit.

Involved in the binding of tRNA to the ribosomes. The chain is Small ribosomal subunit protein uS10 from Mycoplasmoides gallisepticum (strain R(low / passage 15 / clone 2)) (Mycoplasma gallisepticum).